A 252-amino-acid polypeptide reads, in one-letter code: Isoprenyl transferase (252 aa).

Aspartate 32 is a catalytic residue. Aspartate 32 is a Mg(2+) binding site. Substrate-binding positions include 33–36 (GNGR), tryptophan 37, arginine 45, histidine 49, and 77–79 (STE). Residue asparagine 80 is the Proton acceptor of the active site. Substrate contacts are provided by residues tryptophan 81, arginine 83, arginine 200, and 206–208 (RLS). Glutamate 219 lines the Mg(2+) pocket.

The protein belongs to the UPP synthase family. In terms of assembly, homodimer. It depends on Mg(2+) as a cofactor.

Catalyzes the condensation of isopentenyl diphosphate (IPP) with allylic pyrophosphates generating different type of terpenoids. The chain is Isoprenyl transferase from Listeria innocua serovar 6a (strain ATCC BAA-680 / CLIP 11262).